Reading from the N-terminus, the 330-residue chain is Peroxidase 42 (330 aa).

Positions 1-23 (MGGKGVMMVAILCLWALSATSEA) are cleaved as a signal peptide. Cystine bridges form between Cys40-Cys119, Cys73-Cys78, Cys125-Cys323, and Cys204-Cys231. Residue His71 is the Proton acceptor of the active site. Ca(2+)-binding residues include Asp72, Val75, Asp79, and Ser81. Residue Pro167 coordinates substrate. N-linked (GlcNAc...) asparagine glycosylation occurs at Asn170. Position 197 (His197) interacts with heme b. Position 198 (Ser198) interacts with Ca(2+). The Ca(2+) site is built by Asp247, Thr250, and Asp255.

It belongs to the peroxidase family. Classical plant (class III) peroxidase subfamily. Requires heme b as cofactor. Ca(2+) is required as a cofactor. In terms of tissue distribution, constitutively expressed in the whole plant, with the highest expression in roots.

Its subcellular location is the secreted. It carries out the reaction 2 a phenolic donor + H2O2 = 2 a phenolic radical donor + 2 H2O. Removal of H(2)O(2), oxidation of toxic reductants, biosynthesis and degradation of lignin, suberization, auxin catabolism, response to environmental stresses such as wounding, pathogen attack and oxidative stress. These functions might be dependent on each isozyme/isoform in each plant tissue. Its function is as follows. Might function as heat shock-like defense protein. In Arabidopsis thaliana (Mouse-ear cress), this protein is Peroxidase 42 (PER42).